We begin with the raw amino-acid sequence, 150 residues long: Globin-5 (150 aa).

Residues 11–150 (PLSAAEKTKI…MICILLRSAY (140 aa)) enclose the Globin domain. Heme b is bound by residues histidine 74 and histidine 106.

Belongs to the globin family. As to quaternary structure, monomer at high oxygen tension and high pH and dimeric at low oxygen tension and lower pH.

The polypeptide is Globin-5 (Petromyzon marinus (Sea lamprey)).